We begin with the raw amino-acid sequence, 490 residues long: Beta-N-acetyl-D-glucosaminide beta-1,4-N-acetylglucosaminyl-transferase (490 aa).

The Cytoplasmic portion of the chain corresponds to 1-30 (MYLVVCWGRVTGNMISTRHCFSRCKSRSVR). The helical; Signal-anchor for type II membrane protein transmembrane segment at 31 to 50 (VIKATAMLFVAAMLFLALHM) threads the bilayer. Asparagine 51, asparagine 82, asparagine 441, asparagine 459, and asparagine 485 each carry an N-linked (GlcNAc...) asparagine glycan. Residues 51–490 (NFSHEASQQN…YLTGNFTIIS (440 aa)) are Lumenal-facing.

Belongs to the glycosyltransferase 7 family.

Its subcellular location is the golgi apparatus membrane. It catalyses the reaction an N-acetyl-beta-D-glucosaminyl derivative + UDP-N-acetyl-alpha-D-glucosamine = an N-acetyl-beta-D-glucosaminyl-(1-&gt;4)-N-acetyl-beta-D-glucosaminyl derivative + UDP + H(+). It participates in protein modification; protein glycosylation. The sequence is that of Beta-N-acetyl-D-glucosaminide beta-1,4-N-acetylglucosaminyl-transferase (GNT) from Lymnaea stagnalis (Great pond snail).